The chain runs to 440 residues: 3-phosphoshikimate 1-carboxyvinyltransferase (440 aa).

3 residues coordinate 3-phosphoshikimate: Lys25, Ser26, and Arg30. Lys25 provides a ligand contact to phosphoenolpyruvate. Residues Gly96 and Arg124 each contribute to the phosphoenolpyruvate site. The 3-phosphoshikimate site is built by Ser168, Gln169, Asp310, and Lys337. Gln169 lines the phosphoenolpyruvate pocket. The active-site Proton acceptor is the Asp310. Residues Arg341, Arg382, and Lys409 each contribute to the phosphoenolpyruvate site.

Belongs to the EPSP synthase family. Monomer.

The protein localises to the cytoplasm. It carries out the reaction 3-phosphoshikimate + phosphoenolpyruvate = 5-O-(1-carboxyvinyl)-3-phosphoshikimate + phosphate. It functions in the pathway metabolic intermediate biosynthesis; chorismate biosynthesis; chorismate from D-erythrose 4-phosphate and phosphoenolpyruvate: step 6/7. Functionally, catalyzes the transfer of the enolpyruvyl moiety of phosphoenolpyruvate (PEP) to the 5-hydroxyl of shikimate-3-phosphate (S3P) to produce enolpyruvyl shikimate-3-phosphate and inorganic phosphate. This chain is 3-phosphoshikimate 1-carboxyvinyltransferase, found in Chlamydia trachomatis serovar D (strain ATCC VR-885 / DSM 19411 / UW-3/Cx).